Here is a 491-residue protein sequence, read N- to C-terminus: Neuronal acetylcholine receptor subunit beta-2 (491 aa).

An N-terminal signal peptide occupies residues 1-18; that stretch reads MALLRVLCLLAALRRSLC. Topologically, residues 19-226 are extracellular; sequence TDTEERLVEY…ITYDFIIRRK (208 aa). 2 N-linked (GlcNAc...) asparagine glycosylation sites follow: Asn44 and Asn161. Residues Cys148 and Cys162 are joined by a disulfide bond. The helical transmembrane segment at 227-251 threads the bilayer; the sequence is PLFYTINLIIPCILITSLAILVFYL. The Cytoplasmic portion of the chain corresponds to 252 to 258; it reads PSDCGEK. A helical membrane pass occupies residues 259–277; the sequence is MTLCISVLLALTVFLLLIS. Residues 278–292 are Extracellular-facing; that stretch reads KIVPPTSLDVPLVGK. A helical membrane pass occupies residues 293–314; it reads YLMFTMVLVTFSIVTSVCVLNV. The Cytoplasmic portion of the chain corresponds to 315–449; that stretch reads HHRSPTTHTM…WKYVAMVIDR (135 aa). Residues 450 to 468 form a helical membrane-spanning segment; sequence LFLWIFVFVCVFGTVGMFL.

This sequence belongs to the ligand-gated ion channel (TC 1.A.9) family. Acetylcholine receptor (TC 1.A.9.1) subfamily. Beta-2/CHRNB2 sub-subfamily. In terms of assembly, neuronal AChR is a heteropentamer composed of two different types of subunits: alpha and beta. CHRNB2/Beta-2 subunit can be combined to CHRNA2/alpha-2, CHRNA3/alpha-3 or CHRNA4/alpha-4, CHRNA5/alpha-5, CHRNA6/alpha-6 and CHRNB3/beta-3 to give rise to functional receptors.

It is found in the synaptic cell membrane. The protein localises to the cell membrane. It catalyses the reaction Ca(2+)(in) = Ca(2+)(out). The catalysed reaction is K(+)(in) = K(+)(out). It carries out the reaction Na(+)(in) = Na(+)(out). With respect to regulation, activated by a myriad of ligands such as acetylcholine, cytisine, nicotine, choline and epibatidine. nAChR activity is inhibited by the antagonist alpha-conotoxins BuIA, PnIA, PnIC, GID and MII, small disulfide-constrained peptides from cone snails. Component of neuronal acetylcholine receptors (nAChRs) that function as pentameric, ligand-gated cation channels with high calcium permeability among other activities. nAChRs are excitatory neurotrasnmitter receptors formed by a collection of nAChR subunits known to mediate synaptic transmission in the nervous system and the neuromuscular junction. Each nAchR subunit confers differential attributes to channel properties, including activation, deactivation and desensitization kinetics, pH sensitivity, cation permeability, and binding to allosteric modulators. CHRNB2 forms heteropentameric neuronal acetylcholine receptors with CHRNA2, CHRNA3, CHRNA4 and CHRNA6, as well as CHRNA5 and CHRNB3 as accesory subunits. The protein is Neuronal acetylcholine receptor subunit beta-2 (CHRNB2) of Gallus gallus (Chicken).